A 491-amino-acid polypeptide reads, in one-letter code: AP-2 complex subunit mu (491 aa).

Phosphoserine occurs at positions 179, 180, and 181. The MHD domain occupies 209–490 (KDEVFLYVNE…ISKAGSYEVR (282 aa)).

Belongs to the adaptor complexes medium subunit family. As to quaternary structure, adaptor protein complex 2 (AP-2) is a heterotetramer composed of two large adaptins (alpha-type subunit APL3 and beta-type subunit APL1), a medium chain (mu-type subunit APM4) and a small adaptin (sigma-type subunit APS2).

The protein resides in the membrane. It localises to the clathrin-coated pit. The protein localises to the cytoplasmic vesicle. Its subcellular location is the clathrin-coated vesicle membrane. Its function is as follows. Component of the adaptor complexes which link clathrin to receptors in coated vesicles. Clathrin-associated protein complexes are believed to interact with the cytoplasmic tails of membrane proteins, leading to their selection and concentration. The sequence is that of AP-2 complex subunit mu (APM4) from Saccharomyces cerevisiae (strain ATCC 204508 / S288c) (Baker's yeast).